The chain runs to 583 residues: Propane 2-monooxygenase operon transcriptional activator MimR (583 aa).

Residues 320 to 513 (LAGQSSSFRR…LRHVLTETVR (194 aa)) form the Sigma-54 factor interaction domain. ATP contacts are provided by residues 349-356 (ERGSGRTY) and 395-404 (SADFAVIVSD).

Its function is as follows. Acts as a transcriptional activator of the mimABCD operon encoding the propane 2-monooxygenase complex. The protein is Propane 2-monooxygenase operon transcriptional activator MimR of Mycolicibacterium smegmatis (strain ATCC 700084 / mc(2)155) (Mycobacterium smegmatis).